The chain runs to 443 residues: Xaa-Pro dipeptidase (443 aa).

Mn(2+) contacts are provided by Asp246, Asp257, His339, Glu384, and Glu423.

This sequence belongs to the peptidase M24B family. Bacterial-type prolidase subfamily. Mn(2+) serves as cofactor.

The catalysed reaction is Xaa-L-Pro dipeptide + H2O = an L-alpha-amino acid + L-proline. Its function is as follows. Splits dipeptides with a prolyl residue in the C-terminal position. This Yersinia pseudotuberculosis serotype I (strain IP32953) protein is Xaa-Pro dipeptidase.